The primary structure comprises 497 residues: MDAMKYNDLRDFLTLLEQQGELKRITLPVDPHLEITEIADRTLRAGGPALLFENPKGYSMPVLCNLFGTPKRVAMGMGQEDVSALREVGKLLAFLKEPEPPKGFRDLFDKLPQFKQVLNMPTKRLRGAPCQQKIVSGDDVDLNRIPIMTCWPEDAAPLITWGLTVTRGPHKERQNLGIYRQQLIGKNKLIMRWLSHRGGALDYQEWCAAHPGERFPVSVALGADPATILGAVTPVPDTLSEYAFAGLLRGTKTEVVKCISNDLEVPASAEIVLEGYIEQGETAPEGPYGDHTGYYNEVDSFPVFTVTHITQREDAIYHSTYTGRPPDEPAVLGVALNEVFVPILQKQFPEIVDFYLPPEGCSYRLAVVTIKKQYAGHAKRVMMGVWSFLRQFMYTKFVIVCDDDVNARDWNDVIWAITTRMDPARDTVLVENTPIDYLDFASPVSGLGSKMGLDATNKWPGETQREWGRPIKKDPDVVAHIDAIWDELAIFNNGKSA.

Asn175 contacts Mn(2+). Prenylated FMN contacts are provided by residues 178–180, 192–194, and 197–198; these read IYR, RWL, and RG. Residue Glu241 participates in Mn(2+) binding. Asp290 serves as the catalytic Proton donor.

It belongs to the UbiD family. In terms of assembly, homohexamer. Prenylated FMN serves as cofactor. It depends on Mn(2+) as a cofactor.

The protein localises to the cell membrane. The enzyme catalyses a 4-hydroxy-3-(all-trans-polyprenyl)benzoate + H(+) = a 2-(all-trans-polyprenyl)phenol + CO2. Its pathway is cofactor biosynthesis; ubiquinone biosynthesis. Catalyzes the decarboxylation of 3-octaprenyl-4-hydroxy benzoate to 2-octaprenylphenol, an intermediate step in ubiquinone biosynthesis. The protein is 3-octaprenyl-4-hydroxybenzoate carboxy-lyase of Shigella sonnei (strain Ss046).